A 141-amino-acid polypeptide reads, in one-letter code: uncharacterized protein (141 aa).

It belongs to the peptidase C56 family.

This is an uncharacterized protein from Streptomyces lividans.